Here is a 69-residue protein sequence, read N- to C-terminus: MSDEPEHTAKVEPLRKPLPCPECGHPSHREHYPFCSDRCRTQDLSRWLKGSYAIPVAEDESNPDDDGRF.

Residues 1-15 (MSDEPEHTAKVEPLR) show a composition bias toward basic and acidic residues. The tract at residues 1–22 (MSDEPEHTAKVEPLRKPLPCPE) is disordered. Cys20, Cys23, Cys35, and Cys39 together coordinate Zn(2+).

The protein belongs to the DNA gyrase inhibitor YacG family. Interacts with GyrB. It depends on Zn(2+) as a cofactor.

In terms of biological role, inhibits all the catalytic activities of DNA gyrase by preventing its interaction with DNA. Acts by binding directly to the C-terminal domain of GyrB, which probably disrupts DNA binding by the gyrase. The protein is DNA gyrase inhibitor YacG of Allorhizobium ampelinum (strain ATCC BAA-846 / DSM 112012 / S4) (Agrobacterium vitis (strain S4)).